Here is a 263-residue protein sequence, read N- to C-terminus: Small ribosomal subunit protein eS4 (263 aa).

The 64-residue stretch at 42–105 (LPLIIFLRNR…GENFRLIYDV (64 aa)) folds into the S4 RNA-binding domain.

This sequence belongs to the eukaryotic ribosomal protein eS4 family. As to quaternary structure, component of the small ribosomal subunit. Part of the small subunit (SSU) processome, composed of more than 70 proteins and the RNA chaperone small nucleolar RNA (snoRNA) U3.

Its subcellular location is the cytoplasm. The protein resides in the nucleus. The protein localises to the nucleolus. Its function is as follows. Component of the small ribosomal subunit. The ribosome is a large ribonucleoprotein complex responsible for the synthesis of proteins in the cell. Part of the small subunit (SSU) processome, first precursor of the small eukaryotic ribosomal subunit. During the assembly of the SSU processome in the nucleolus, many ribosome biogenesis factors, an RNA chaperone and ribosomal proteins associate with the nascent pre-rRNA and work in concert to generate RNA folding, modifications, rearrangements and cleavage as well as targeted degradation of pre-ribosomal RNA by the RNA exosome. This Danio rerio (Zebrafish) protein is Small ribosomal subunit protein eS4 (rps4x).